An 82-amino-acid polypeptide reads, in one-letter code: Small ribosomal subunit protein bS18 (82 aa).

The protein belongs to the bacterial ribosomal protein bS18 family. Part of the 30S ribosomal subunit. Forms a tight heterodimer with protein bS6.

Its function is as follows. Binds as a heterodimer with protein bS6 to the central domain of the 16S rRNA, where it helps stabilize the platform of the 30S subunit. This chain is Small ribosomal subunit protein bS18, found in Methylobacterium nodulans (strain LMG 21967 / CNCM I-2342 / ORS 2060).